A 206-amino-acid chain; its full sequence is Large ribosomal subunit protein uL4 (206 aa).

The disordered stretch occupies residues lysine 65–glycine 85.

The protein belongs to the universal ribosomal protein uL4 family. In terms of assembly, part of the 50S ribosomal subunit.

One of the primary rRNA binding proteins, this protein initially binds near the 5'-end of the 23S rRNA. It is important during the early stages of 50S assembly. It makes multiple contacts with different domains of the 23S rRNA in the assembled 50S subunit and ribosome. In terms of biological role, forms part of the polypeptide exit tunnel. In Parvibaculum lavamentivorans (strain DS-1 / DSM 13023 / NCIMB 13966), this protein is Large ribosomal subunit protein uL4.